Reading from the N-terminus, the 131-residue chain is Glycine cleavage system H protein (131 aa).

Residues 24–106 (RVTVGISDHA…YGEGWMFVVE (83 aa)) form the Lipoyl-binding domain. Position 65 is an N6-lipoyllysine (Lys65).

This sequence belongs to the GcvH family. As to quaternary structure, the glycine cleavage system is composed of four proteins: P, T, L and H. It depends on (R)-lipoate as a cofactor.

The glycine cleavage system catalyzes the degradation of glycine. The H protein shuttles the methylamine group of glycine from the P protein to the T protein. This chain is Glycine cleavage system H protein, found in Stenotrophomonas maltophilia (strain K279a).